Reading from the N-terminus, the 467-residue chain is MSKGTLFDKVWDLHTVGTLPSGLTQLFIGLHLIHEVTSPQAFAMLRERGLKVLFPERTVATVDHIVPTENQARPFVDSLAEEMIQALENNCQENNITFYNIGSGSQGIVHVIAPELGLTQPGMTIACGDSHTSSHGAFGAIAFGIGTSQVRDVLASQTLALSKLKVRKIEVNGNLNPGVYAKDVILHIIRTLGVKGGVGYGYEFAGTTFEQMNMEERMTVCNMAIEGGARCGYVNPDRVTYDYLKGRDFAPKGADWDKAVAWWDSIKSDVDAQYDDVVVFDAAEISPTVTWGITPGQGIGVNQSVPQPEELLEEDRFIAEEAYRYMDLYPGQPIKGTKIDVCFIGSCTNGRISDLREAAKIAKGRHVAEGIKAFVVPGSERVKQEAETEGLDKIFQEAGFEWREPGCSMCLAMNPDKLQGRQISASSSNRNFKGRQGSSSGRTLLMSPAMVATAAIKGEVSDVRELL.

Residues cysteine 347, cysteine 407, and cysteine 410 each coordinate [4Fe-4S] cluster. Over residues 422–442 (QISASSSNRNFKGRQGSSSGR) the composition is skewed to polar residues. Residues 422 to 443 (QISASSSNRNFKGRQGSSSGRT) form a disordered region.

This sequence belongs to the aconitase/IPM isomerase family. LeuC type 1 subfamily. In terms of assembly, heterodimer of LeuC and LeuD. It depends on [4Fe-4S] cluster as a cofactor.

The enzyme catalyses (2R,3S)-3-isopropylmalate = (2S)-2-isopropylmalate. Its pathway is amino-acid biosynthesis; L-leucine biosynthesis; L-leucine from 3-methyl-2-oxobutanoate: step 2/4. In terms of biological role, catalyzes the isomerization between 2-isopropylmalate and 3-isopropylmalate, via the formation of 2-isopropylmaleate. This Nostoc punctiforme (strain ATCC 29133 / PCC 73102) protein is 3-isopropylmalate dehydratase large subunit.